We begin with the raw amino-acid sequence, 136 residues long: SNARE-associated protein Snapin (136 aa).

A2 carries the post-translational modification N-acetylalanine. Phosphoserine is present on S10. T14 bears the Phosphothreonine mark. The stretch at 37–126 (VQQLDSHVHA…TARRRAMLDS (90 aa)) forms a coiled coil. A Phosphoserine; by PKA modification is found at S50. The tract at residues 83 to 136 (KKLLNARRRVVLVNNILQNAQERLRRLNHSVAKETARRRAMLDSGIYPPGSPGK) is interaction with TOR1A. Phosphoserine is present on S126. Y129 carries the post-translational modification Phosphotyrosine. Position 133 is a phosphoserine (S133).

Belongs to the SNAPIN family. Component of the biogenesis of lysosome-related organelles complex 1 (BLOC-1) composed of BLOC1S1, BLOC1S2, BLOC1S3, BLOC1S4, BLOC1S5, BLOC1S6, DTNBP1/BLOC1S7 and SNAPIN/BLOC1S8. Octamer composed of one copy each BLOC1S1, BLOC1S2, BLOC1S3, BLOC1S4, BLOC1S5, BLOC1S6, DTNBP1/BLOC1S7 and SNAPIN/BLOC1S8. The BLOC-1 complex associates with the AP-3 protein complex and membrane protein cargos. Component of the BLOC-one-related complex (BORC) which is composed of BLOC1S1, BLOC1S2, BORCS5, BORCS6, BORCS7, BORCS8, KXD1 and SNAPIN. Associates with the SNARE complex. Interacts with CSNK1D, SNAP23 and STX4A but not with STX1A, VAMP2 and SYT1. Interacts with SNAP25; the interaction with SNAP25 is increased by its phosphorylation. Interacts with CNTRL, NANOS1, PUM2 and RGS7. Interacts with TOR1A; the interaction is direct and associates SNAPIN with the CSN complex. In terms of assembly, (Microbial infection) Interacts with human cytomegalovirus/HHV-5 protein UL70. Phosphorylated by CSNK1D/CK1. Phosphorylated by PKD, phosphorylation controls SNAPIN protein stability. In terms of tissue distribution, expressed in male germ cells of adult testis (at protein level).

It is found in the membrane. Its subcellular location is the cytoplasm. The protein resides in the cytosol. The protein localises to the perinuclear region. It localises to the golgi apparatus membrane. It is found in the lysosome membrane. Its subcellular location is the cytoplasmic vesicle. The protein resides in the secretory vesicle. The protein localises to the synaptic vesicle membrane. In terms of biological role, component of the BLOC-1 complex, a complex that is required for normal biogenesis of lysosome-related organelles (LRO), such as platelet dense granules and melanosomes. In concert with the AP-3 complex, the BLOC-1 complex is required to target membrane protein cargos into vesicles assembled at cell bodies for delivery into neurites and nerve terminals. The BLOC-1 complex, in association with SNARE proteins, is also proposed to be involved in neurite extension. Plays a role in intracellular vesicle trafficking and synaptic vesicle recycling. May modulate a step between vesicle priming, fusion and calcium-dependent neurotransmitter release through its ability to potentiate the interaction of synaptotagmin with the SNAREs and the plasma-membrane-associated protein SNAP25. Its phosphorylation state influences exocytotic protein interactions and may regulate synaptic vesicle exocytosis. May also have a role in the mechanisms of SNARE-mediated membrane fusion in non-neuronal cells. As part of the BORC complex may play a role in lysosomes movement and localization at the cell periphery. Associated with the cytosolic face of lysosomes, the BORC complex may recruit ARL8B and couple lysosomes to microtubule plus-end-directed kinesin motor. In Homo sapiens (Human), this protein is SNARE-associated protein Snapin (SNAPIN).